A 401-amino-acid polypeptide reads, in one-letter code: Protein-glutamate methylesterase/protein-glutamine glutaminase (401 aa).

The region spanning 16 to 134 (RVLVIDDSAV…LAGAEEFRRD (119 aa)) is the Response regulatory domain. At Asp67 the chain carries 4-aspartylphosphate. A disordered region spans residues 146–208 (PIPPVPTQRD…PQGRGTPRNT (63 aa)). 2 stretches are compositionally biased toward low complexity: residues 166 to 176 (AAPGAPVARSI) and 185 to 199 (SAPA…AQPP). One can recognise a CheB-type methylesterase domain in the interval 205–400 (PRNTARPEII…PGIVRRAKGG (196 aa)). Active-site residues include Ser219, His246, and Asp342.

It belongs to the CheB family. In terms of processing, phosphorylated by CheA. Phosphorylation of the N-terminal regulatory domain activates the methylesterase activity.

The protein resides in the cytoplasm. The enzyme catalyses [protein]-L-glutamate 5-O-methyl ester + H2O = L-glutamyl-[protein] + methanol + H(+). It carries out the reaction L-glutaminyl-[protein] + H2O = L-glutamyl-[protein] + NH4(+). In terms of biological role, involved in chemotaxis. Part of a chemotaxis signal transduction system that modulates chemotaxis in response to various stimuli. Catalyzes the demethylation of specific methylglutamate residues introduced into the chemoreceptors (methyl-accepting chemotaxis proteins or MCP) by CheR. Also mediates the irreversible deamidation of specific glutamine residues to glutamic acid. This chain is Protein-glutamate methylesterase/protein-glutamine glutaminase, found in Maricaulis maris (strain MCS10) (Caulobacter maris).